Consider the following 581-residue polypeptide: Kelch-like protein 30 (581 aa).

Residues 33 to 100 (ADVTLLVGDQ…VYTGRLTITQ (68 aa)) form the BTB domain. In terms of domain architecture, BACK spans 135-237 (CLGICEFGEQ…PRPCVQQLLA (103 aa)). 6 Kelch repeats span residues 280 to 327 (EEDE…ALNS), 328 to 378 (DVYV…ALNG), 379 to 423 (EIYA…GCQG), 425 to 472 (LYLV…ALNG), 474 to 514 (LYLI…PLGD), and 515 to 564 (LLYV…TIFL).

In Mus musculus (Mouse), this protein is Kelch-like protein 30 (Klhl30).